We begin with the raw amino-acid sequence, 373 residues long: 3-dehydroquinate synthase (373 aa).

Residues 74–79, 108–112, 132–133, K145, K154, and 172–175 each bind NAD(+); these read DAEAGK, GAATD, TT, and TLET. Zn(2+) contacts are provided by E187, H250, and H266.

Belongs to the sugar phosphate cyclases superfamily. Dehydroquinate synthase family. It depends on Co(2+) as a cofactor. Zn(2+) is required as a cofactor. NAD(+) serves as cofactor.

The protein resides in the cytoplasm. It carries out the reaction 7-phospho-2-dehydro-3-deoxy-D-arabino-heptonate = 3-dehydroquinate + phosphate. It functions in the pathway metabolic intermediate biosynthesis; chorismate biosynthesis; chorismate from D-erythrose 4-phosphate and phosphoenolpyruvate: step 2/7. In terms of biological role, catalyzes the conversion of 3-deoxy-D-arabino-heptulosonate 7-phosphate (DAHP) to dehydroquinate (DHQ). This Nocardia farcinica (strain IFM 10152) protein is 3-dehydroquinate synthase.